A 499-amino-acid polypeptide reads, in one-letter code: Serine/threonine protein phosphatase 2A 57 kDa regulatory subunit B' beta isoform (499 aa).

The span at 1 to 13 (MFKKIMKGGHRKP) shows a compositional bias: basic residues. Residues 1–65 (MFKKIMKGGH…PVTATPPPPP (65 aa)) form a disordered region.

It belongs to the phosphatase 2A regulatory subunit B56 family. In terms of assembly, PP2A consists of a common heteromeric enzyme, composed of a catalytic subunit (subunits C), a constant regulatory subunit (subunit A), and a variety of regulatory subunits such as subunits B (the R2/B/PR55/B55, R3/B''/PR72/PR130/PR59 and R5/B'/B56 families). Interacts with BZR1. Interacts with BRI1. Interacts with SRK2E/OST1. As to expression, expressed ubiquitously, higher levels in cotyledons and flowers.

Its subcellular location is the nucleus. The protein localises to the cytoplasm. In terms of biological role, the B regulatory subunit may modulate substrate selectivity and catalytic activity, and may also direct the localization of the catalytic enzyme to a particular subcellular compartment. Required for the formation of the PP2A holoenzyme that positively regulates brassinosteroid signaling by dephosphorylating and activating BZR1. This chain is Serine/threonine protein phosphatase 2A 57 kDa regulatory subunit B' beta isoform (B'BETA), found in Arabidopsis thaliana (Mouse-ear cress).